A 116-amino-acid chain; its full sequence is NADH-ubiquinone oxidoreductase chain 3 (116 aa).

The next 3 helical transmembrane spans lie at 3–23 (LFAT…LVSF), 56–76 (FFLV…LLPL), and 88–108 (TLFW…YEWA).

Belongs to the complex I subunit 3 family. In terms of assembly, core subunit of respiratory chain NADH dehydrogenase (Complex I) which is composed of 45 different subunits.

The protein resides in the mitochondrion inner membrane. The enzyme catalyses a ubiquinone + NADH + 5 H(+)(in) = a ubiquinol + NAD(+) + 4 H(+)(out). Core subunit of the mitochondrial membrane respiratory chain NADH dehydrogenase (Complex I) which catalyzes electron transfer from NADH through the respiratory chain, using ubiquinone as an electron acceptor. Essential for the catalytic activity of complex I. In Danio rerio (Zebrafish), this protein is NADH-ubiquinone oxidoreductase chain 3 (mt-nd3).